Consider the following 261-residue polypeptide: Small ribosomal subunit protein uS2 (261 aa).

Residues 222 to 261 (GKALREQDGEANEEQPISEEEKKEVLEEAMSEEDFEGDKE) form a disordered region. 2 stretches are compositionally biased toward acidic residues: residues 230-239 (GEANEEQPIS) and 248-261 (EEAM…GDKE).

It belongs to the universal ribosomal protein uS2 family.

This Campylobacter lari (strain RM2100 / D67 / ATCC BAA-1060) protein is Small ribosomal subunit protein uS2.